A 183-amino-acid polypeptide reads, in one-letter code: Ribosome-recycling factor (183 aa).

Positions D134 to D156 are disordered.

The protein belongs to the RRF family.

It is found in the cytoplasm. In terms of biological role, responsible for the release of ribosomes from messenger RNA at the termination of protein biosynthesis. May increase the efficiency of translation by recycling ribosomes from one round of translation to another. In Leptospira biflexa serovar Patoc (strain Patoc 1 / Ames), this protein is Ribosome-recycling factor.